Here is a 208-residue protein sequence, read N- to C-terminus: Outer-membrane lipoprotein carrier protein (208 aa).

The N-terminal stretch at 1–21 (MKRTATLLVVALILALNTAQA) is a signal peptide.

This sequence belongs to the LolA family. As to quaternary structure, monomer.

Its subcellular location is the periplasm. Functionally, participates in the translocation of lipoproteins from the inner membrane to the outer membrane. Only forms a complex with a lipoprotein if the residue after the N-terminal Cys is not an aspartate (The Asp acts as a targeting signal to indicate that the lipoprotein should stay in the inner membrane). This is Outer-membrane lipoprotein carrier protein from Halorhodospira halophila (strain DSM 244 / SL1) (Ectothiorhodospira halophila (strain DSM 244 / SL1)).